Consider the following 215-residue polypeptide: Adenylate kinase (215 aa).

An ATP-binding site is contributed by glycine 10–threonine 15. The interval serine 30 to valine 59 is NMP. AMP contacts are provided by residues threonine 31, arginine 36, leucine 57–valine 59, glycine 85–arginine 88, and glutamine 92. The interval glycine 126–aspartate 163 is LID. Arginine 127 is an ATP binding site. Residues cysteine 130 and cysteine 133 each coordinate Zn(2+). Serine 136–tyrosine 137 contributes to the ATP binding site. Residues cysteine 150 and cysteine 153 each contribute to the Zn(2+) site. The AMP site is built by arginine 160 and arginine 171. ATP is bound at residue glutamine 199.

This sequence belongs to the adenylate kinase family. As to quaternary structure, monomer.

The protein resides in the cytoplasm. The catalysed reaction is AMP + ATP = 2 ADP. Its pathway is purine metabolism; AMP biosynthesis via salvage pathway; AMP from ADP: step 1/1. Its function is as follows. Catalyzes the reversible transfer of the terminal phosphate group between ATP and AMP. Plays an important role in cellular energy homeostasis and in adenine nucleotide metabolism. This chain is Adenylate kinase, found in Clostridium acetobutylicum (strain ATCC 824 / DSM 792 / JCM 1419 / IAM 19013 / LMG 5710 / NBRC 13948 / NRRL B-527 / VKM B-1787 / 2291 / W).